A 129-amino-acid polypeptide reads, in one-letter code: uncharacterized protein (129 aa).

This is an uncharacterized protein from Sinorhizobium fredii (strain NBRC 101917 / NGR234).